Reading from the N-terminus, the 535-residue chain is MGWLFLKVLFLGVTFLGCLYPLVDFCPSGETRGQKPNFVIILADDMGWGDLGANWAETKDTANLDKMAAEGMRFVDFHAAASTCSPSRASLLTGRLGLRNGVTHNFAVTSVGGLPLNETTLAEVLQQAGYVTGMIGKWHLGHHGPYHPNFRGFDYYFGIPYSHDMGCTDTPGYNHPPCPACPRGDRPSRSLERDCYTDVALPLYENLNIVEQPVNLSSLAHKYAEKAIQFIQHASASGRPFLLYMGLAHMHVPISRTQLSAVLRGRRPYGAGLREMDSLVGQIKDKVDRTAKENTFLWFTGDNGPWAQKCELAGSVGPFTGLWQTHQGGSPAKQTTWEGGHRVPALAYWPGRVPVNVTSTALLSVLDIFPTVVALAGASLPQDRHFDGLDASEVLFGWSQTGHRVLFHPNSGAAGEFGALQTVRLGSYKAFYVSGGAKACDGDVGREQHHDPPLIFNLEDDVAEAVPLDRGSAEYQGVLPKVREILADVLLDIAGDNTSRADYTRHPSVTPCCNPHHVACRCQATGWTDFPTGRC.

The N-terminal stretch at 1–18 (MGWLFLKVLFLGVTFLGC) is a signal peptide. Aspartate 44, aspartate 45, and cysteine 84 together coordinate Ca(2+). Cysteine 84 functions as the Nucleophile in the catalytic mechanism. Cysteine 84 is modified (3-oxoalanine (Cys)). A glycan (N-linked (GlcNAc...) asparagine) is linked at asparagine 117. Residue lysine 137 participates in substrate binding. Residue histidine 139 is part of the active site. Residue serine 162 participates in substrate binding. Asparagine 215 carries an N-linked (GlcNAc...) asparagine glycan. A substrate-binding site is contributed by histidine 251. The Ca(2+) site is built by aspartate 302 and asparagine 303. N-linked (GlcNAc...) asparagine glycans are attached at residues asparagine 356 and asparagine 497.

Belongs to the sulfatase family. The cofactor is Ca(2+). Post-translationally, N-glycosylated with both high mannose and complex type sugars. In terms of processing, the conversion to 3-oxoalanine (also known as C-formylglycine, FGly), of a serine or cysteine residue in prokaryotes and of a cysteine residue in eukaryotes, is critical for catalytic activity. The 63-kDa precursor undergoes proteolytic processing in two steps, yielding two fragments in the first step (apparent molecular masses of 44 and 18 kDa). In the second step, the 44-kDa fragment is processed further to the 34- and 10-kDa chains. The 10-kDa chain is a cleavage product of the 44-kDa fragment but linked to the 18-kDa chain through a disulfide bridge.

It is found in the lysosome. The enzyme catalyses an aryl sulfate + H2O = a phenol + sulfate + H(+). It catalyses the reaction Hydrolysis of the 3-sulfate groups of the N-sulfo-D-glucosamine 3-O-sulfate units of heparin.. Functionally, displays arylsulfatase activity with pseudosubstrates at acidic pH, such as p-nitrocatechol sulfate. Catalyzes the hydrolysis of the 3-sulfate groups of the N-sulfo-D-glucosamine 3-O-sulfate units of heparin. The chain is Arylsulfatase G (ARSG) from Canis lupus familiaris (Dog).